A 326-amino-acid polypeptide reads, in one-letter code: Type II methyltransferase M.CviAII (326 aa).

It belongs to the N(4)/N(6)-methyltransferase family.

The catalysed reaction is a 2'-deoxyadenosine in DNA + S-adenosyl-L-methionine = an N(6)-methyl-2'-deoxyadenosine in DNA + S-adenosyl-L-homocysteine + H(+). Functionally, an alpha subtype methylase that recognizes the double-stranded sequence 5'-CATG-3', methylates A-2 on both strands and protects the DNA from cleavage by the CviAII endonuclease. In Paramecium bursaria Chlorella virus 1 (PBCV-1), this protein is Type II methyltransferase M.CviAII (CVIAIIM).